Consider the following 411-residue polypeptide: Ornithine cyclodeaminase (411 aa).

NAD(+)-binding residues include Asn236, Ala237, Asp315, Thr347, Met348, Leu349, His350, Asp368, Asp391, and Val392.

Belongs to the AgrE/ArgZ ornithine cyclodeaminase family. NAD(+) serves as cofactor.

The enzyme catalyses L-ornithine = L-proline + NH4(+). Catalyzes the conversion of ornithine to proline, with the release of ammonia. This chain is Ornithine cyclodeaminase, found in Methanothermobacter thermautotrophicus (strain ATCC 29096 / DSM 1053 / JCM 10044 / NBRC 100330 / Delta H) (Methanobacterium thermoautotrophicum).